A 158-amino-acid polypeptide reads, in one-letter code: S-ribosylhomocysteine lyase (158 aa).

Fe cation-binding residues include H54, H58, and C124.

The protein belongs to the LuxS family. As to quaternary structure, homodimer. Fe cation serves as cofactor.

It catalyses the reaction S-(5-deoxy-D-ribos-5-yl)-L-homocysteine = (S)-4,5-dihydroxypentane-2,3-dione + L-homocysteine. Involved in the synthesis of autoinducer 2 (AI-2) which is secreted by bacteria and is used to communicate both the cell density and the metabolic potential of the environment. The regulation of gene expression in response to changes in cell density is called quorum sensing. Catalyzes the transformation of S-ribosylhomocysteine (RHC) to homocysteine (HC) and 4,5-dihydroxy-2,3-pentadione (DPD). The sequence is that of S-ribosylhomocysteine lyase from Lactobacillus johnsonii (strain CNCM I-12250 / La1 / NCC 533).